A 411-amino-acid chain; its full sequence is Serine hydroxymethyltransferase (411 aa).

Residues Leu-117 and 121–123 (GHL) contribute to the (6S)-5,6,7,8-tetrahydrofolate site. Lys-226 is subject to N6-(pyridoxal phosphate)lysine. Residues Glu-241 and 349 to 351 (SPF) each bind (6S)-5,6,7,8-tetrahydrofolate.

This sequence belongs to the SHMT family. Homodimer. Requires pyridoxal 5'-phosphate as cofactor.

The protein localises to the cytoplasm. It catalyses the reaction (6R)-5,10-methylene-5,6,7,8-tetrahydrofolate + glycine + H2O = (6S)-5,6,7,8-tetrahydrofolate + L-serine. It functions in the pathway one-carbon metabolism; tetrahydrofolate interconversion. Its pathway is amino-acid biosynthesis; glycine biosynthesis; glycine from L-serine: step 1/1. Functionally, catalyzes the reversible interconversion of serine and glycine with tetrahydrofolate (THF) serving as the one-carbon carrier. This reaction serves as the major source of one-carbon groups required for the biosynthesis of purines, thymidylate, methionine, and other important biomolecules. Also exhibits THF-independent aldolase activity toward beta-hydroxyamino acids, producing glycine and aldehydes, via a retro-aldol mechanism. The polypeptide is Serine hydroxymethyltransferase (Oceanobacillus iheyensis (strain DSM 14371 / CIP 107618 / JCM 11309 / KCTC 3954 / HTE831)).